A 608-amino-acid polypeptide reads, in one-letter code: MDRILARMKKSTGRRGGDKNITPVRRLERRDAARNINYDAASCSSSSAEDLSVSTSSLMTRSLEFPEPTSFRIGGGVGEMDRIYRSLGVSGPDDLAISFDAWEACKKRSSSDVVNRFKSFDLDKVRDQDLSEEGPSGVVVGSDSMNHKVQGQDLSEAGPSGGIVTELSEIGNLITPVDRLVADGVVENRRVMERTPTIVKSKGYLVPNNVVAVGVGVGGGIKGLRPPVLKPPPAMKRPPIDHRGSSWDFLTHFAPSETVKRPSSSSSSSEDGCDEEEGKEEEAEAEEMGARFIQLGDTADETCSFTTNEGDSSSTVSNTSPIYPDGGAIITSWQKGQLLGRGSFGSVYEGISGDGDFFAVKEVSLLDQGSQAQECIQQLEGEIKLLSQLQHQNIVRYRGTAKDGSNLYIFLELVTQGSLLKLYQRYQLRDSVVSLYTRQILDGLKYLHDKGFIHRDIKCANILVDANGAVKLADFGLAKVSKFNDIKSCKGTPFWMAPEVINRKDSDGYGSPADIWSLGCTVLEMCTGQIPYSDLEPVQALFRIGRGTLPEVPDTLSLDARLFILKCLKVNPEERPTAAELLNHPFVRRPLPSVGSGGSGSASPLLRR.

Over residues 1-13 the composition is skewed to basic residues; sequence MDRILARMKKSTG. A disordered region spans residues 1-20; sequence MDRILARMKKSTGRRGGDKN. Residues 1–325 form a regulatory region region; that stretch reads MDRILARMKK…VSNTSPIYPD (325 aa). Serine 62 is subject to Phosphoserine. The segment at 192–234 is binding with MPK4; that stretch reads MERTPTIVKSKGYLVPNNVVAVGVGVGGGIKGLRPPVLKPPPA. Disordered regions lie at residues 228–247 and 256–287; these read VLKPPPAMKRPPIDHRGSSW and SETVKRPSSSSSSSEDGCDEEEGKEEEAEAEE. Residues 271 to 287 show a composition bias toward acidic residues; that stretch reads DGCDEEEGKEEEAEAEE. The Protein kinase domain maps to 333–587; that stretch reads WQKGQLLGRG…AAELLNHPFV (255 aa). Residues 339 to 347 and lysine 361 each bind ATP; that span reads LGRGSFGSV. Aspartate 456 functions as the Proton acceptor in the catalytic mechanism. A Phosphoserine modification is found at serine 603.

It belongs to the protein kinase superfamily. STE Ser/Thr protein kinase family. MAP kinase kinase kinase subfamily. Interacts with MKK1, MMK2 and MPK4. May form a ternary complex composed of MEKK1 and MKK1/MKK2 and MPK4. Interacts with RACK1A, RACK1B and RACK1C. Binds to CRLK1. In terms of processing, phosphorylated by CRLK1 in response to cold.

The protein resides in the cell membrane. The protein localises to the endosome. It carries out the reaction L-seryl-[protein] + ATP = O-phospho-L-seryl-[protein] + ADP + H(+). The catalysed reaction is L-threonyl-[protein] + ATP = O-phospho-L-threonyl-[protein] + ADP + H(+). Its activity is regulated as follows. Activated by cold via CRLK1-mediated phosphorylation and leading to elevated kinase activity towards MKK2. Functionally, the MEKK1, MKK1/MKK2 and MPK4 function in a signaling pathway that modulates the expression of genes responding to biotic and abiotic stresses and also plays an important role in pathogen defense by negatively regulating innate immunity. Involved in the innate immune MAP kinase signaling cascade (MEKK1, MKK4/MKK5 and MPK3/MPK6) downstream of bacterial flagellin receptor FLS2. May be involved in the cold and salinity stress-mediated MAP kinase signaling cascade (MEKK1, MKK1/MKK2 and MPK4/MPK6). Activates by phosphorylation the downstream MKK2, MKK4 and MKK5 in a calcium-dependent manner. This Arabidopsis thaliana (Mouse-ear cress) protein is Mitogen-activated protein kinase kinase kinase 1 (MEKK1).